Reading from the N-terminus, the 122-residue chain is Large ribosomal subunit protein uL14 (122 aa).

Belongs to the universal ribosomal protein uL14 family. Part of the 50S ribosomal subunit. Forms a cluster with proteins L3 and L19. In the 70S ribosome, L14 and L19 interact and together make contacts with the 16S rRNA in bridges B5 and B8.

Binds to 23S rRNA. Forms part of two intersubunit bridges in the 70S ribosome. This chain is Large ribosomal subunit protein uL14, found in Chlorobium phaeobacteroides (strain DSM 266 / SMG 266 / 2430).